The following is a 402-amino-acid chain: tRNA(Met) cytidine acetate ligase (402 aa).

Residues Ile7 to His20, Gly102, Asn171, and Arg196 each bind ATP.

This sequence belongs to the TmcAL family.

The protein resides in the cytoplasm. It carries out the reaction cytidine(34) in elongator tRNA(Met) + acetate + ATP = N(4)-acetylcytidine(34) in elongator tRNA(Met) + AMP + diphosphate. Its function is as follows. Catalyzes the formation of N(4)-acetylcytidine (ac(4)C) at the wobble position of elongator tRNA(Met), using acetate and ATP as substrates. First activates an acetate ion to form acetyladenylate (Ac-AMP) and then transfers the acetyl group to tRNA to form ac(4)C34. The polypeptide is tRNA(Met) cytidine acetate ligase (Clostridium perfringens (strain SM101 / Type A)).